Reading from the N-terminus, the 438-residue chain is SPbeta prophage-derived uncharacterized protein YopA (438 aa).

Residues 391 to 411 (LHVLYLGVWYLELLTLGILGY) traverse the membrane as a helical segment.

It localises to the cell membrane. The chain is SPbeta prophage-derived uncharacterized protein YopA (yopA) from Bacillus subtilis (strain 168).